The chain runs to 556 residues: Formate--tetrahydrofolate ligase (556 aa).

Residue 65–72 (TPAGEGKS) coordinates ATP.

Belongs to the formate--tetrahydrofolate ligase family.

The enzyme catalyses (6S)-5,6,7,8-tetrahydrofolate + formate + ATP = (6R)-10-formyltetrahydrofolate + ADP + phosphate. It functions in the pathway one-carbon metabolism; tetrahydrofolate interconversion. The polypeptide is Formate--tetrahydrofolate ligase (Enterococcus faecalis (strain ATCC 700802 / V583)).